The following is a 151-amino-acid chain: Large ribosomal subunit protein uL15 (151 aa).

Residues 1–60 form a disordered region; sequence MAENSPLKAHNLRPAPGAKTAKTRVGRGEASKGKTAGRGTKGTKARYQVPERFEGGQMPL.

Belongs to the universal ribosomal protein uL15 family. In terms of assembly, part of the 50S ribosomal subunit.

Binds to the 23S rRNA. The sequence is that of Large ribosomal subunit protein uL15 from Streptomyces griseus subsp. griseus (strain JCM 4626 / CBS 651.72 / NBRC 13350 / KCC S-0626 / ISP 5235).